The following is a 608-amino-acid chain: MDLRHLLFTLALVCANDSLSASDDLLQWPQISKCRSPELETFSCYWTDGKVTTSGTIQLLYMKRSDEDWKECPDYITAGENSCYFNTSYTSIWIPYCVKLANKDEVFDEKCFSVDEIVLPDPPVHLNWTLLNTSQTGIHGDIQVRWDPPPTADVQKGWITLEYELQYKEVNETKWKELEPRLSTVVPLYSLKMGRDYEIRVRSRQRTSEKFGEFSEILYVSFTQAGIEFVHCAEEIEFPWFLVVVFGVCGLAVTAILILLSKQPRLKMLIFPPVPVPKIKGIDPDLLKKGKLDEVNSILASHDNYKTQLYNDDLWVEFIELDIDDSDEKNRVSDTDRLLSDDHLKSHSCLGAKDDDSGRASCYEPDIPETDFSASDTCDAISDIDQFKKVTEKEEDLLCLHRKDDVEALQSLANTDTQQPHTSTQSESRESWPPFADSTDSANPSVQTQLSNQNSLTNTDFYAQVSDITPAGSVVLSPGQKSKVGRAQCESCTEQNFTMDNAYFCEADVKKCIAVISQEEDEPRVQEQSCNEDTYFTTESLTTTGINLGASMAETPSMEMPVPDYTSIHIVHSPQGLVLNATALPVPEKEFNMSCGYVSTDQLNKIMP.

An N-terminal signal peptide occupies residues 1–16 (MDLRHLLFTLALVCAN). The Extracellular portion of the chain corresponds to 17 to 237 (DSLSASDDLL…EFVHCAEEIE (221 aa)). Cystine bridges form between cysteine 34–cysteine 44 and cysteine 72–cysteine 83. A glycan (N-linked (GlcNAc...) asparagine) is linked at asparagine 86. A disulfide bridge links cysteine 97 with cysteine 111. The region spanning 122–226 (PPVHLNWTLL…ILYVSFTQAG (105 aa)) is the Fibronectin type-III domain. Residues asparagine 127, asparagine 132, and asparagine 171 are each glycosylated (N-linked (GlcNAc...) asparagine). The WSXWS motif motif lies at 211–215 (FGEFS). The chain crosses the membrane as a helical span at residues 238 to 261 (FPWFLVVVFGVCGLAVTAILILLS). The Cytoplasmic portion of the chain corresponds to 262–608 (KQPRLKMLIF…STDQLNKIMP (347 aa)). A required for JAK2 binding region spans residues 267-352 (KMLIFPPVPV…HLKSHSCLGA (86 aa)). The Box 1 motif signature appears at 270-278 (IFPPVPVPK). Positions 313–322 (DLWVEFIELD) match the UbE motif motif. Composition is skewed to polar residues over residues 413-426 (ANTD…STQS) and 438-451 (STDS…TQLS). The segment at 413-451 (ANTDTQQPHTSTQSESRESWPPFADSTDSANPSVQTQLS) is disordered.

The protein belongs to the type I cytokine receptor family. Type 1 subfamily. On GH binding, proteolytically cleaved, in vitro, to produce GHBP. As to expression, broad specificity.

The protein resides in the cell membrane. It localises to the secreted. Functionally, receptor for pituitary gland growth hormone (GH1) involved in regulating postnatal body growth. On ligand binding, couples to the JAK2/STAT5 pathway. Its function is as follows. The soluble form (GHBP) acts as a reservoir of growth hormone in plasma and may be a modulator/inhibitor of GH signaling. This Gallus gallus (Chicken) protein is Growth hormone receptor (GHR).